Consider the following 290-residue polypeptide: Arylamine N-acetyltransferase 2 (290 aa).

Catalysis depends on C68, which acts as the Acyl-thioester intermediate. CoA contacts are provided by S103 and G104. Residue 106–107 participates in substrate binding; sequence IH. Active-site residues include H107 and D122. Position 208 (Y208) interacts with CoA.

The protein belongs to the arylamine N-acetyltransferase family.

It is found in the cytoplasm. It carries out the reaction an arylamine + acetyl-CoA = an N-acetylarylamine + CoA. The catalysed reaction is an N-hydroxyarylamine + acetyl-CoA = an N-acetoxyarylamine + CoA. In terms of biological role, catalyzes the N- or O-acetylation of various arylamine and heterocyclic amine substrates, and participates in the detoxification of a plethora of hydrazine and arylamine drugs. This is Arylamine N-acetyltransferase 2 (Nat2) from Mus musculus (Mouse).